Consider the following 206-residue polypeptide: Thiamine-phosphate synthase (206 aa).

4-amino-2-methyl-5-(diphosphooxymethyl)pyrimidine is bound by residues Gln-39–Lys-43 and Asn-74. Mg(2+)-binding residues include Asp-75 and Asp-94. A 4-amino-2-methyl-5-(diphosphooxymethyl)pyrimidine-binding site is contributed by Ser-112. Thr-138–Thr-140 is a 2-[(2R,5Z)-2-carboxy-4-methylthiazol-5(2H)-ylidene]ethyl phosphate binding site. A 4-amino-2-methyl-5-(diphosphooxymethyl)pyrimidine-binding site is contributed by Lys-141. 2-[(2R,5Z)-2-carboxy-4-methylthiazol-5(2H)-ylidene]ethyl phosphate-binding positions include Gly-170 and Ile-190–Ser-191.

This sequence belongs to the thiamine-phosphate synthase family. Requires Mg(2+) as cofactor.

The catalysed reaction is 2-[(2R,5Z)-2-carboxy-4-methylthiazol-5(2H)-ylidene]ethyl phosphate + 4-amino-2-methyl-5-(diphosphooxymethyl)pyrimidine + 2 H(+) = thiamine phosphate + CO2 + diphosphate. The enzyme catalyses 2-(2-carboxy-4-methylthiazol-5-yl)ethyl phosphate + 4-amino-2-methyl-5-(diphosphooxymethyl)pyrimidine + 2 H(+) = thiamine phosphate + CO2 + diphosphate. It carries out the reaction 4-methyl-5-(2-phosphooxyethyl)-thiazole + 4-amino-2-methyl-5-(diphosphooxymethyl)pyrimidine + H(+) = thiamine phosphate + diphosphate. It participates in cofactor biosynthesis; thiamine diphosphate biosynthesis; thiamine phosphate from 4-amino-2-methyl-5-diphosphomethylpyrimidine and 4-methyl-5-(2-phosphoethyl)-thiazole: step 1/1. In terms of biological role, condenses 4-methyl-5-(beta-hydroxyethyl)thiazole monophosphate (THZ-P) and 2-methyl-4-amino-5-hydroxymethyl pyrimidine pyrophosphate (HMP-PP) to form thiamine monophosphate (TMP). The sequence is that of Thiamine-phosphate synthase from Oceanobacillus iheyensis (strain DSM 14371 / CIP 107618 / JCM 11309 / KCTC 3954 / HTE831).